Reading from the N-terminus, the 169-residue chain is MYTSGYANRSSSFPTTTHNAARAATENAAAGLVSEVVYHEDQPMMAQLLLLPLLRHLGQQSRWQLWLTPQQKLSREWVQSAGLPLTKVMQISQLAPPHTLESMIRALRTGNYSVVIGWLTEELTEEEHASLVEAANVGNAVGFIMRPVRAHALPRRQHSGLKIHSNLYH.

The tract at residues 106-112 is ftsZ binding; it reads ALRTGNY. Residues 162–169 are lon protease binding; sequence KIHSNLYH.

Belongs to the SulA family. As to quaternary structure, interacts with FtsZ. Is rapidly cleaved and degraded by the Lon protease once DNA damage is repaired.

Its function is as follows. Component of the SOS system and an inhibitor of cell division. Accumulation of SulA causes rapid cessation of cell division and the appearance of long, non-septate filaments. In the presence of GTP, binds a polymerization-competent form of FtsZ in a 1:1 ratio, thus inhibiting FtsZ polymerization and therefore preventing it from participating in the assembly of the Z ring. This mechanism prevents the premature segregation of damaged DNA to daughter cells during cell division. In Salmonella arizonae (strain ATCC BAA-731 / CDC346-86 / RSK2980), this protein is Cell division inhibitor SulA.